The chain runs to 122 residues: Large ribosomal subunit protein uL18 (122 aa).

It belongs to the universal ribosomal protein uL18 family. As to quaternary structure, part of the 50S ribosomal subunit; part of the 5S rRNA/L5/L18/L25 subcomplex. Contacts the 5S and 23S rRNAs.

In terms of biological role, this is one of the proteins that bind and probably mediate the attachment of the 5S RNA into the large ribosomal subunit, where it forms part of the central protuberance. This is Large ribosomal subunit protein uL18 from Fervidobacterium nodosum (strain ATCC 35602 / DSM 5306 / Rt17-B1).